A 338-amino-acid polypeptide reads, in one-letter code: Ketol-acid reductoisomerase (NADP(+)) (338 aa).

The region spanning 1 to 181 (MKIYYDKDCN…GGGKAGIIET (181 aa)) is the KARI N-terminal Rossmann domain. NADP(+) contacts are provided by residues 24-27 (YGSQ), Lys47, Ser50, Ser52, and 82-85 (DEIQ). The active site involves His107. Gly133 serves as a coordination point for NADP(+). A KARI C-terminal knotted domain is found at 182–327 (SFKEETETDL…ARLRSMMAWI (146 aa)). Mg(2+)-binding residues include Asp190, Glu194, Glu226, and Glu230. Ser251 is a substrate binding site.

It belongs to the ketol-acid reductoisomerase family. Requires Mg(2+) as cofactor.

The catalysed reaction is (2R)-2,3-dihydroxy-3-methylbutanoate + NADP(+) = (2S)-2-acetolactate + NADPH + H(+). It catalyses the reaction (2R,3R)-2,3-dihydroxy-3-methylpentanoate + NADP(+) = (S)-2-ethyl-2-hydroxy-3-oxobutanoate + NADPH + H(+). The protein operates within amino-acid biosynthesis; L-isoleucine biosynthesis; L-isoleucine from 2-oxobutanoate: step 2/4. It participates in amino-acid biosynthesis; L-valine biosynthesis; L-valine from pyruvate: step 2/4. Involved in the biosynthesis of branched-chain amino acids (BCAA). Catalyzes an alkyl-migration followed by a ketol-acid reduction of (S)-2-acetolactate (S2AL) to yield (R)-2,3-dihydroxy-isovalerate. In the isomerase reaction, S2AL is rearranged via a Mg-dependent methyl migration to produce 3-hydroxy-3-methyl-2-ketobutyrate (HMKB). In the reductase reaction, this 2-ketoacid undergoes a metal-dependent reduction by NADPH to yield (R)-2,3-dihydroxy-isovalerate. The protein is Ketol-acid reductoisomerase (NADP(+)) of Geotalea uraniireducens (strain Rf4) (Geobacter uraniireducens).